We begin with the raw amino-acid sequence, 303 residues long: Heme A synthase (303 aa).

Residues 1–8 are Cytoplasmic-facing; sequence MFGKKNLK. A helical transmembrane segment spans residues 9 to 29; it reads WLGVVATLMMTFVQLGGALVT. Topologically, residues 30–67 are extracellular; the sequence is KTGSADGCGSSWPLCHGALIPEFFPIDTIIELSHRAVS. Cys-37 and Cys-44 are oxidised to a cystine. The active site involves Glu-60. His-63 is a heme o binding site. A helical transmembrane segment spans residues 68–88; that stretch reads ALSLLMVLWLVITAWKHIGYI. At 89-93 the chain is on the cytoplasmic side; the sequence is KEIKP. A helical transmembrane segment spans residues 94–114; sequence LSIISVGFLLLQALIGAAAVI. Residues 115-125 are Extracellular-facing; sequence WQQNDYVLALH. His-125 serves as a coordination point for heme o. The chain crosses the membrane as a helical span at residues 126 to 146; sequence FGISLISFSSVFLITLIIFSI. At 147 to 163 the chain is on the cytoplasmic side; that stretch reads DQKYEADELYIKKPLRR. A helical transmembrane segment spans residues 164-184; it reads LTWLMAIIIYCGVYTGALVRH. The Extracellular portion of the chain corresponds to 185 to 215; sequence ADASLAYGGWPLPFHDLVPHSEQDWVQLTHR. A heme b-binding site is contributed by His-214. The helical transmembrane segment at 216 to 236 threads the bilayer; the sequence is IMAFIVFTIIMITYIHAVKNY. Residues 237–244 lie on the Cytoplasmic side of the membrane; that stretch reads PNNRTVHY. Residues 245–265 form a helical membrane-spanning segment; the sequence is GYTAAFILVILQVITGALSIM. Residues 266-270 lie on the Extracellular side of the membrane; the sequence is TNVNL. A helical transmembrane segment spans residues 271–291; that stretch reads LIALFHALFITYLFGMTTYFI. Residue His-276 coordinates heme b. The Cytoplasmic portion of the chain corresponds to 292-303; that stretch reads MLMLRSVRSDKQ.

It belongs to the COX15/CtaA family. Type 1 subfamily. Interacts with CtaB. Heme b serves as cofactor.

It is found in the cell membrane. It carries out the reaction Fe(II)-heme o + 2 A + H2O = Fe(II)-heme a + 2 AH2. Its pathway is porphyrin-containing compound metabolism; heme A biosynthesis; heme A from heme O: step 1/1. In terms of biological role, catalyzes the conversion of heme O to heme A by two successive hydroxylations of the methyl group at C8. The first hydroxylation forms heme I, the second hydroxylation results in an unstable dihydroxymethyl group, which spontaneously dehydrates, resulting in the formyl group of heme A. The sequence is that of Heme A synthase from Staphylococcus aureus (strain MSSA476).